A 31-amino-acid chain; its full sequence is Photosystem II reaction center protein T (31 aa).

Residues 3-23 (SLVYIFVFVVALGVLFFAIAF) traverse the membrane as a helical segment.

Belongs to the PsbT family. In terms of assembly, PSII is composed of 1 copy each of membrane proteins PsbA, PsbB, PsbC, PsbD, PsbE, PsbF, PsbH, PsbI, PsbJ, PsbK, PsbL, PsbM, PsbT, PsbX, PsbY, PsbZ, Psb30/Ycf12, peripheral proteins PsbO, CyanoQ (PsbQ), PsbU, PsbV and a large number of cofactors. It forms dimeric complexes.

Its subcellular location is the cellular thylakoid membrane. In terms of biological role, found at the monomer-monomer interface of the photosystem II (PS II) dimer, plays a role in assembly and dimerization of PSII. PSII is a light-driven water plastoquinone oxidoreductase, using light energy to abstract electrons from H(2)O, generating a proton gradient subsequently used for ATP formation. The sequence is that of Photosystem II reaction center protein T from Synechococcus elongatus (strain ATCC 33912 / PCC 7942 / FACHB-805) (Anacystis nidulans R2).